The sequence spans 159 residues: Cytochrome c-type biogenesis protein CcmE (159 aa).

The Cytoplasmic portion of the chain corresponds to M1–R8. Residues L9 to A29 form a helical; Signal-anchor for type II membrane protein membrane-spanning segment. Residues L30–Y159 are Periplasmic-facing. Residues H124 and Y128 each contribute to the heme site. The disordered stretch occupies residues E135–Y159. The span at A136–Y159 shows a compositional bias: basic and acidic residues.

Belongs to the CcmE/CycJ family.

The protein resides in the cell inner membrane. Heme chaperone required for the biogenesis of c-type cytochromes. Transiently binds heme delivered by CcmC and transfers the heme to apo-cytochromes in a process facilitated by CcmF and CcmH. This is Cytochrome c-type biogenesis protein CcmE from Marinobacter nauticus (strain ATCC 700491 / DSM 11845 / VT8) (Marinobacter aquaeolei).